A 249-amino-acid polypeptide reads, in one-letter code: Tumor necrosis factor receptor superfamily member 13B (249 aa).

The Extracellular portion of the chain corresponds to 1 to 128 (MAMAFCPKDQ…LSSDQLTLYC (128 aa)). 2 TNFR-Cys repeats span residues 5-38 (FCPKDQYWDSSRKSCVSCALTCSQRSQRTCTDFC) and 42-76 (NCRKEQGRYYDHLLGACVSCDSTCTQHPQQCAHFC). 6 disulfides stabilise this stretch: Cys-6-Cys-19, Cys-22-Cys-34, Cys-26-Cys-38, Cys-43-Cys-58, Cys-61-Cys-72, and Cys-65-Cys-76. The disordered stretch occupies residues 86–116 (LQPELGRPQAGEVEVRSDNSGRHQGSEHGPG). A compositionally biased stretch (basic and acidic residues) spans 98-111 (VEVRSDNSGRHQGS). The chain crosses the membrane as a helical; Signal-anchor for type III membrane protein span at residues 129 to 149 (TLGVCLCAIFCCFLVALASFL). At 150–249 (RRRGEPLPSQ…ASTGDARPAT (100 aa)) the chain is on the cytoplasmic side. Residues 156–176 (LPSQPAGPRGSQANSPHAHRP) are disordered.

Binds TRAF2, TRAF5 and TRAF6. Binds the NH2-terminal domain of CAMLG with its C-terminus.

It localises to the membrane. In terms of biological role, receptor for TNFSF13/APRIL and TNFSF13B/TALL1/BAFF/BLYS that binds both ligands with similar high affinity. Mediates calcineurin-dependent activation of NF-AT, as well as activation of NF-kappa-B and AP-1. Involved in the stimulation of B- and T-cell function and the regulation of humoral immunity. This chain is Tumor necrosis factor receptor superfamily member 13B (Tnfrsf13b), found in Mus musculus (Mouse).